The primary structure comprises 418 residues: Delta(14)-sterol reductase TM7SF2 (418 aa).

Helical transmembrane passes span 13-35 (FGGP…HLLL), 62-81 (ALLL…LLPA), 102-124 (GFQA…LPLG), 129-148 (MLLP…SLLL), 255-277 (FGFM…QAQF), and 287-304 (LPMA…YYIF). NADP(+) contacts are provided by residues lysine 311, arginine 315, leucine 338, tryptophan 343, and 350–351 (NY). A helical membrane pass occupies residues 355–377 (LIMALAWSLPCGLSHLLPYFYVL). NADP(+)-binding positions include aspartate 390, 394–398 (CLQKY), and tyrosine 405.

Belongs to the ERG4/ERG24 family. As to expression, strongly expressed in liver, weaker in ovary, testis, kidney and brain.

The protein localises to the endoplasmic reticulum membrane. It localises to the microsome membrane. The catalysed reaction is 4,4-dimethyl-5alpha-cholesta-8,24-dien-3beta-ol + NADP(+) = 4,4-dimethyl-5alpha-cholesta-8,14,24-trien-3beta-ol + NADPH + H(+). It carries out the reaction 5alpha-cholest-8,14-dien-3beta-ol + NADPH + H(+) = 5alpha-cholest-8-en-3beta-ol + NADP(+). It catalyses the reaction 4,4-dimethyl-8,14-cholestadien-3beta-ol + NADPH + H(+) = 4,4-dimethyl-5alpha-cholest-8-en-3beta-ol + NADP(+). It functions in the pathway steroid biosynthesis; cholesterol biosynthesis. Catalyzes the reduction of the C14-unsaturated bond of lanosterol, as part of the metabolic pathway leading to cholesterol biosynthesis. The chain is Delta(14)-sterol reductase TM7SF2 (Tm7sf2) from Mus musculus (Mouse).